We begin with the raw amino-acid sequence, 278 residues long: Large ribosomal subunit protein uL2 (278 aa).

Composition is skewed to basic residues over residues 210–219 (RSRWLGKRPQ) and 252–263 (KKSRGIKTRNSK). The segment at 210–278 (RSRWLGKRPQ…LIIRHRKGNK (69 aa)) is disordered.

The protein belongs to the universal ribosomal protein uL2 family. In terms of assembly, part of the 50S ribosomal subunit. Forms a bridge to the 30S subunit in the 70S ribosome.

One of the primary rRNA binding proteins. Required for association of the 30S and 50S subunits to form the 70S ribosome, for tRNA binding and peptide bond formation. It has been suggested to have peptidyltransferase activity; this is somewhat controversial. Makes several contacts with the 16S rRNA in the 70S ribosome. This chain is Large ribosomal subunit protein uL2, found in Lactobacillus johnsonii (strain CNCM I-12250 / La1 / NCC 533).